We begin with the raw amino-acid sequence, 195 residues long: Large ribosomal subunit protein bL9 (195 aa).

The protein belongs to the bacterial ribosomal protein bL9 family.

Binds to the 23S rRNA. In Rhodopseudomonas palustris (strain TIE-1), this protein is Large ribosomal subunit protein bL9.